Reading from the N-terminus, the 121-residue chain is Large ribosomal subunit protein bL19 (121 aa).

The protein belongs to the bacterial ribosomal protein bL19 family.

Functionally, this protein is located at the 30S-50S ribosomal subunit interface and may play a role in the structure and function of the aminoacyl-tRNA binding site. This chain is Large ribosomal subunit protein bL19, found in Porphyromonas gingivalis (strain ATCC BAA-308 / W83).